The following is a 1049-amino-acid chain: Bifunctional cytochrome P450/NADPH--P450 reductase (1049 aa).

A cytochrome P450 region spans residues threonine 2–arginine 472. Tyrosine 52 is a binding site for (9Z)-hexadecenoate. Cysteine 401 lines the heme pocket. Positions lysine 473–glycine 1049 are NADPH--P450 reductase. The region spanning leucine 483–tryptophan 622 is the Flavodoxin-like domain. Residues serine 489–alanine 494, serine 536–glycine 539, cysteine 570–aspartate 572, and threonine 578–glutamine 580 each bind FMN. The FAD-binding FR-type domain maps to histidine 660–proline 892.

It in the N-terminal section; belongs to the cytochrome P450 family. FAD serves as cofactor. Requires FMN as cofactor. Heme is required as a cofactor.

The protein localises to the cytoplasm. It catalyses the reaction 2 oxidized [cytochrome P450] + NADPH = 2 reduced [cytochrome P450] + NADP(+) + H(+). It carries out the reaction an organic molecule + reduced [NADPH--hemoprotein reductase] + O2 = an alcohol + oxidized [NADPH--hemoprotein reductase] + H2O + H(+). Its activity is regulated as follows. Inhibited by N-(12-imidazolyl-dodecanoyl)-L-leucine. Functions as a fatty acid monooxygenase. Catalyzes hydroxylation of fatty acids at omega-1, omega-2 and omega-3 positions. Shows activity toward medium and long-chain fatty acids, with optimum chain lengths of 12, 14 and 16 carbons (lauric, myristic, and palmitic acids). Able to metabolize some of these primary metabolites to secondary and tertiary products. Marginal activity towards short chain lengths of 8-10 carbons. Hydroxylates highly branched fatty acids, which play an essential role in membrane fluidity regulation. Also displays a NADPH-dependent reductase activity in the C-terminal domain, which allows electron transfer from NADPH to the heme iron of the cytochrome P450 N-terminal domain. Involved in inactivation of quorum sensing signals of other competing bacteria by oxidazing efficiently acyl homoserine lactones (AHLs), molecules involved in quorum sensing signaling pathways, and their lactonolysis products acyl homoserines (AHs). This chain is Bifunctional cytochrome P450/NADPH--P450 reductase, found in Priestia megaterium (strain ATCC 14581 / DSM 32 / CCUG 1817 / JCM 2506 / NBRC 15308 / NCIMB 9376 / NCTC 10342 / NRRL B-14308 / VKM B-512 / Ford 19) (Bacillus megaterium).